The chain runs to 265 residues: Glutamate racemase (265 aa).

Substrate is bound by residues 12–13 (DS) and 44–45 (YG). The active-site Proton donor/acceptor is Cys75. A substrate-binding site is contributed by 76-77 (NT). The active-site Proton donor/acceptor is the Cys186. 187-188 (TH) contacts substrate.

The protein belongs to the aspartate/glutamate racemases family.

The catalysed reaction is L-glutamate = D-glutamate. Its pathway is cell wall biogenesis; peptidoglycan biosynthesis. Its function is as follows. Provides the (R)-glutamate required for cell wall biosynthesis. This is Glutamate racemase from Pseudomonas putida (strain ATCC 47054 / DSM 6125 / CFBP 8728 / NCIMB 11950 / KT2440).